The sequence spans 359 residues: Mannonate dehydratase (359 aa).

It belongs to the mannonate dehydratase family. Fe(2+) is required as a cofactor. The cofactor is Mn(2+).

It carries out the reaction D-mannonate = 2-dehydro-3-deoxy-D-gluconate + H2O. It participates in carbohydrate metabolism; pentose and glucuronate interconversion. Catalyzes the dehydration of D-mannonate. This is Mannonate dehydratase (uxuA) from Bacillus subtilis (strain 168).